A 1038-amino-acid polypeptide reads, in one-letter code: Importin-7 (1038 aa).

N-acetylmethionine is present on Met-1. The 80-residue stretch at 22–101 folds into the Importin N-terminal domain; sequence AERQLNEAHK…RENIVEAIIH (80 aa). The interval 881–910 is disordered; that stretch reads EHENDSDDDEDAEDDDETEELGSDEDDIDE. Residues 884–910 are compositionally biased toward acidic residues; the sequence is NDSDDDEDAEDDDETEELGSDEDDIDE. Ser-886 bears the Phosphoserine mark. Thr-898 carries the post-translational modification Phosphothreonine. A phosphoserine mark is found at Ser-903 and Ser-1020.

It belongs to the importin beta family. In terms of assembly, forms a heterodimer with KPNB1. Interacts with histone H1. Interacts with H2A, H2B, H3 and H4 histones. Interacts with SNUPN and XPO1. Interacts with RPS7 and RPL5. Interacts with RPL23A (via BIB domain). Binds directly to nuclear pore complexes. Interacts with SMAD4 and NUP93; translocates SMAD4 to the nucleus through the NPC upon BMP7 stimulation resulting in activation of SMAD4 signaling. Interacts with phosphorylated SMAD2; the interaction facilitates translocation of SMAD2 to the nucleus. Interacts with SRP19. Interacts with RUNX2; the interaction inhibits RUNX2 nuclear translocation in osteoblasts. Interacts with HDAC6, DLX3 and KLF4; the interaction facilitates HDAC6, DLX3 and KLF4 nuclear translocation in dental papilla cells.

The protein resides in the cytoplasm. It localises to the nucleus. Functions in nuclear protein import, either by acting as autonomous nuclear transport receptor or as an adapter-like protein in association with the importin-beta subunit KPNB1. Acting autonomously is thought to serve itself as receptor for nuclear localization signals (NLS) and to promote translocation of import substrates through the nuclear pore complex (NPC) by an energy requiring, Ran-dependent mechanism. At the nucleoplasmic side of the NPC, Ran binds to importin, the importin/substrate complex dissociates and importin is re-exported from the nucleus to the cytoplasm where GTP hydrolysis releases Ran. Mediates autonomously the nuclear import of ribosomal proteins RPL23A, RPS7 and RPL5. In association with KPNB1 mediates the nuclear import of H1 histone and the Ran-binding site of IPO7 is not required but synergizes with that of KPNB1 in importin/substrate complex dissociation. Promotes odontoblast differentiation via promoting nuclear translocation of DLX3, KLF4, SMAD2, thereby facilitating the transcription of target genes that play a role in odontoblast differentiation. Facilitates BMP4-induced translocation of SMAD1 to the nucleus and recruitment to the MSX1 gene promoter, thereby promotes the expression of the odontogenic regulator MSX1 in dental mesenchymal cells. Also promotes odontoblast differentiation by facilitating the nuclear translocation of HDAC6 and subsequent repression of RUNX2 expression. Inhibits osteoblast differentiation by inhibiting nuclear translocation of RUNX2 and therefore inhibition of RUNX2 target gene transcription. In vitro, mediates nuclear import of H2A, H2B, H3 and H4 histones. The polypeptide is Importin-7 (Ipo7) (Mus musculus (Mouse)).